We begin with the raw amino-acid sequence, 465 residues long: 5'-adenylylsulfate reductase 1, chloroplastic (465 aa).

A chloroplast-targeting transit peptide spans 1–53; sequence MAMSVNVSSSSSSGIINSRFGVSLEPKVSQIGSLRLLDRVHVAPVSLNLSGKR. Residues 73 to 327 are reductase domain; it reads LAATMVAEIA…KAKECGLHKG (255 aa). A Thioredoxin domain is found at 344 to 465; that stretch reads SAVADIFKSE…SLTSFLNLVR (122 aa). Residues cysteine 385 and cysteine 388 each act as nucleophile in the active site. An intrachain disulfide couples cysteine 385 to cysteine 388.

The protein belongs to the APS reductase family. [4Fe-4S] cluster is required as a cofactor. As to expression, leaves, roots and stem.

It localises to the plastid. It is found in the chloroplast. It catalyses the reaction glutathione disulfide + sulfite + AMP + 2 H(+) = adenosine 5'-phosphosulfate + 2 glutathione. With respect to regulation, stimulated by sodium sulfate &gt; ammonium sulfate and is sensitive to inactivation by 5'AMP. Its function is as follows. Reduces sulfate for Cys biosynthesis. Substrate preference is adenosine-5'-phosphosulfate (APS) &gt;&gt; 3'-phosphoadenosine-5'-phosphosulfate (PAPS). Uses glutathione or DTT as source of protons. The protein is 5'-adenylylsulfate reductase 1, chloroplastic (APR1) of Arabidopsis thaliana (Mouse-ear cress).